The primary structure comprises 119 residues: UPF0212 protein Mlab_0931 (119 aa).

Belongs to the UPF0212 family.

In Methanocorpusculum labreanum (strain ATCC 43576 / DSM 4855 / Z), this protein is UPF0212 protein Mlab_0931.